Here is a 521-residue protein sequence, read N- to C-terminus: UDP-N-acetylmuramate--L-alanine ligase (521 aa).

136-142 (GAHGKTT) lines the ATP pocket.

Belongs to the MurCDEF family.

Its subcellular location is the cytoplasm. The enzyme catalyses UDP-N-acetyl-alpha-D-muramate + L-alanine + ATP = UDP-N-acetyl-alpha-D-muramoyl-L-alanine + ADP + phosphate + H(+). Its pathway is cell wall biogenesis; peptidoglycan biosynthesis. Functionally, cell wall formation. The protein is UDP-N-acetylmuramate--L-alanine ligase of Bifidobacterium adolescentis (strain ATCC 15703 / DSM 20083 / NCTC 11814 / E194a).